The chain runs to 313 residues: tRNA uridine(34) hydroxylase (313 aa).

The 95-residue stretch at 124 to 218 (SDPEVLLIDT…YLEEVPQEET (95 aa)) folds into the Rhodanese domain. The active-site Cysteine persulfide intermediate is cysteine 178.

This sequence belongs to the TrhO family.

The enzyme catalyses uridine(34) in tRNA + AH2 + O2 = 5-hydroxyuridine(34) in tRNA + A + H2O. Functionally, catalyzes oxygen-dependent 5-hydroxyuridine (ho5U) modification at position 34 in tRNAs. This chain is tRNA uridine(34) hydroxylase, found in Pseudomonas fluorescens (strain SBW25).